Consider the following 360-residue polypeptide: UPF0284 protein APE_2029.1 (360 aa).

It belongs to the UPF0284 family.

This Aeropyrum pernix (strain ATCC 700893 / DSM 11879 / JCM 9820 / NBRC 100138 / K1) protein is UPF0284 protein APE_2029.1.